Consider the following 514-residue polypeptide: Glutamate--cysteine ligase (514 aa).

It belongs to the glutamate--cysteine ligase type 1 family. Type 1 subfamily.

It carries out the reaction L-cysteine + L-glutamate + ATP = gamma-L-glutamyl-L-cysteine + ADP + phosphate + H(+). The protein operates within sulfur metabolism; glutathione biosynthesis; glutathione from L-cysteine and L-glutamate: step 1/2. The sequence is that of Glutamate--cysteine ligase from Enterobacter sp. (strain 638).